Reading from the N-terminus, the 154-residue chain is Nucleoside diphosphate kinase A1 (154 aa).

The ATP site is built by lysine 13, phenylalanine 61, arginine 89, threonine 95, arginine 106, and asparagine 116. Residue histidine 119 is the Pros-phosphohistidine intermediate of the active site.

It belongs to the NDK family. It depends on Mg(2+) as a cofactor.

The protein localises to the cytoplasm. The enzyme catalyses a 2'-deoxyribonucleoside 5'-diphosphate + ATP = a 2'-deoxyribonucleoside 5'-triphosphate + ADP. The catalysed reaction is a ribonucleoside 5'-diphosphate + ATP = a ribonucleoside 5'-triphosphate + ADP. In terms of biological role, major role in the synthesis of nucleoside triphosphates other than ATP. The ATP gamma phosphate is transferred to the NDP beta phosphate via a ping-pong mechanism, using a phosphorylated active-site intermediate. This is Nucleoside diphosphate kinase A1 from Xenopus laevis (African clawed frog).